The primary structure comprises 306 residues: MKQQPLLGFTFALITAMAWGSLPIALKQVLSVMNAQTIVWYRFIIAAVSLLALLAYKKQLPELMKVRQYAWIMLIGVIGLTSNFLLFSSSLNYIEPSVAQIFIHLSSFGMLICGVLIFKEKLGLHQKIGLFLLLIGLGLFFNDRFDAFAGLNQYSTGVILGVGGALIWVAYGMAQKLMLRKFNSQQILLMMYLGCAIAFMPMADFSQVQELTPLALICFIYCCLNTLIGYGSYAEALNRWDVSKVSVVITLVPLFTILFSHIAHYFSPADFAAPELNNISYIGAFVVVCGAILSAIGHKLLPHKNH.

Helical transmembrane passes span 6 to 26 (LLGF…PIAL), 35 to 55 (AQTI…ALLA), 69 to 89 (YAWI…LFSS), 98 to 118 (VAQI…VLIF), 122 to 142 (LGLH…LFFN), 154 to 174 (YSTG…YGMA), 186 to 206 (QILL…ADFS), 211 to 231 (LTPL…IGYG), 247 to 267 (VVIT…HYFS), and 281 to 301 (YIGA…HKLL). EamA domains lie at 17-142 (MAWG…LFFN) and 166-296 (LIWV…LSAI).

It belongs to the EamA transporter family.

It localises to the cell membrane. This is an uncharacterized protein from Haemophilus influenzae (strain ATCC 51907 / DSM 11121 / KW20 / Rd).